A 505-amino-acid chain; its full sequence is Histidine ammonia-lyase (505 aa).

The 5-imidazolinone (Ala-Gly) cross-link spans 141-143; it reads ASG. Serine 142 is modified (2,3-didehydroalanine (Ser)).

Belongs to the PAL/histidase family. Post-translationally, contains an active site 4-methylidene-imidazol-5-one (MIO), which is formed autocatalytically by cyclization and dehydration of residues Ala-Ser-Gly.

The protein resides in the cytoplasm. The catalysed reaction is L-histidine = trans-urocanate + NH4(+). It functions in the pathway amino-acid degradation; L-histidine degradation into L-glutamate; N-formimidoyl-L-glutamate from L-histidine: step 1/3. In Bacillus cereus (strain AH187), this protein is Histidine ammonia-lyase.